A 562-amino-acid chain; its full sequence is uncharacterized protein (562 aa).

5 helical membrane-spanning segments follow: residues 15–34 (WGGG…AFGI), 41–63 (VAGI…HFNL), 78–97 (LILF…FSAF), 104–126 (LNML…HFIT), and 165–187 (IALG…LLGL). 2 RCK C-terminal domains span residues 204-286 (QGLG…ITAF) and 289-374 (KPIE…VLGN). Transmembrane regions (helical) follow at residues 384–403 (LIPI…IPFM), 413–430 (LGLA…SRFG), 450–472 (IGIS…ETII), 476–498 (GYVW…GFIG), 505–524 (NYYT…PALA), and 539–561 (YATV…ILSL).

The protein belongs to the AAE transporter (TC 2.A.81) family.

The protein resides in the cell membrane. This is an uncharacterized protein from Bacteroides fragilis (strain YCH46).